Reading from the N-terminus, the 128-residue chain is Glycine cleavage system H protein (128 aa).

One can recognise a Lipoyl-binding domain in the interval I23–E105. N6-lipoyllysine is present on K64.

This sequence belongs to the GcvH family. In terms of assembly, the glycine cleavage system is composed of four proteins: P, T, L and H. Requires (R)-lipoate as cofactor.

The glycine cleavage system catalyzes the degradation of glycine. The H protein shuttles the methylamine group of glycine from the P protein to the T protein. The sequence is that of Glycine cleavage system H protein from Symbiobacterium thermophilum (strain DSM 24528 / JCM 14929 / IAM 14863 / T).